A 298-amino-acid chain; its full sequence is Glutamyl-Q tRNA(Asp) synthetase (298 aa).

Residues 9–13 and glutamate 45 contribute to the L-glutamate site; that span reads RFAPS. A 'HIGH' region motif is present at residues 12–22; the sequence is PSPSGELHFGS. Positions 101, 103, 115, and 119 each coordinate Zn(2+). Positions 172 and 190 each coordinate L-glutamate. Residues 228–232 carry the 'KMSKS' region motif; that stretch reads KLSKQ. Lysine 231 serves as a coordination point for ATP.

This sequence belongs to the class-I aminoacyl-tRNA synthetase family. GluQ subfamily. It depends on Zn(2+) as a cofactor.

Functionally, catalyzes the tRNA-independent activation of glutamate in presence of ATP and the subsequent transfer of glutamate onto a tRNA(Asp). Glutamate is transferred on the 2-amino-5-(4,5-dihydroxy-2-cyclopenten-1-yl) moiety of the queuosine in the wobble position of the QUC anticodon. This chain is Glutamyl-Q tRNA(Asp) synthetase, found in Salmonella choleraesuis (strain SC-B67).